The following is a 677-amino-acid chain: UvrABC system protein B (677 aa).

The Helicase ATP-binding domain maps to 26–414 (DNLDAGLAHQ…SGNEVVEQVV (389 aa)). 39–46 (GVTGSGKT) is an ATP binding site. Residues 92–115 (YYDYYQPEAYVPTTDTFIEKDASI) carry the Beta-hairpin motif. One can recognise a Helicase C-terminal domain in the interval 432–598 (QVDDLMSEIR…GLNKDITDVM (167 aa)). The 36-residue stretch at 637 to 672 (MKEIDAKEKEMYKAAQNLEFEQAGKLRDEVAELREQ) folds into the UVR domain.

The protein belongs to the UvrB family. As to quaternary structure, forms a heterotetramer with UvrA during the search for lesions. Interacts with UvrC in an incision complex.

Its subcellular location is the cytoplasm. Functionally, the UvrABC repair system catalyzes the recognition and processing of DNA lesions. A damage recognition complex composed of 2 UvrA and 2 UvrB subunits scans DNA for abnormalities. Upon binding of the UvrA(2)B(2) complex to a putative damaged site, the DNA wraps around one UvrB monomer. DNA wrap is dependent on ATP binding by UvrB and probably causes local melting of the DNA helix, facilitating insertion of UvrB beta-hairpin between the DNA strands. Then UvrB probes one DNA strand for the presence of a lesion. If a lesion is found the UvrA subunits dissociate and the UvrB-DNA preincision complex is formed. This complex is subsequently bound by UvrC and the second UvrB is released. If no lesion is found, the DNA wraps around the other UvrB subunit that will check the other stand for damage. This chain is UvrABC system protein B, found in Idiomarina loihiensis (strain ATCC BAA-735 / DSM 15497 / L2-TR).